Reading from the N-terminus, the 536-residue chain is Glyco-Gag protein (536 aa).

Over 1-54 the chain is Cytoplasmic; the sequence is MSGASSGTATGARLFGISSVLGEYRVLIGDEGAGPSRSPSEVSFSVWYRSRAAR. Residues 55 to 75 form a helical membrane-spanning segment; that stretch reads LVILCLVASFLVPCLTFLIAE. Topologically, residues 76–536 are extracellular; that stretch reads TVMGQTVTTP…TQNRNKDREE (461 aa). Asn137 is a glycosylation site (N-linked (GlcNAc...) asparagine; by host). Disordered regions lie at residues 174–284 and 494–536; these read VRPF…NNRP and ETPE…DREE. A compositionally biased stretch (pro residues) spans 177-198; sequence FLPPPKPPTPLPQPLSPQPSAP. Positions 199 to 209 are enriched in low complexity; sequence PTSSLYPVLPK. Pro residues-rich tracts occupy residues 210–223 and 233–246; these read TNPP…PDPS and EPPP…PPPS. The span at 494–511 shows a compositional bias: basic and acidic residues; that stretch reads ETPEEREERLWQRQEERD.

In terms of processing, glycosylated by host. Post-translationally, cleaved by host near the middle of the molecule, releasing the c-terminal half containing capsid and nucleoprotein domains op GAG.

It is found in the host cell membrane. Plays a role in viral particle release. Presumably acts by facilitating the fission of the virion bud at the cell surface. The polypeptide is Glyco-Gag protein (Feline sarcoma virus (strain McDonough)).